The following is a 203-amino-acid chain: Glycerol-3-phosphate acyltransferase (203 aa).

Transmembrane regions (helical) follow at residues 4–24 (LALI…AVLI), 68–88 (IPVW…VIAI), 117–137 (PIGL…AVLF), and 155–175 (TWMF…LIVF).

Belongs to the PlsY family. In terms of assembly, probably interacts with PlsX.

Its subcellular location is the cell inner membrane. It carries out the reaction an acyl phosphate + sn-glycerol 3-phosphate = a 1-acyl-sn-glycero-3-phosphate + phosphate. It functions in the pathway lipid metabolism; phospholipid metabolism. Catalyzes the transfer of an acyl group from acyl-phosphate (acyl-PO(4)) to glycerol-3-phosphate (G3P) to form lysophosphatidic acid (LPA). This enzyme utilizes acyl-phosphate as fatty acyl donor, but not acyl-CoA or acyl-ACP. The chain is Glycerol-3-phosphate acyltransferase from Vibrio campbellii (strain ATCC BAA-1116).